The sequence spans 232 residues: Phosphatidylserine decarboxylase proenzyme (232 aa).

Ser-190 functions as the Schiff-base intermediate with substrate; via pyruvic acid in the catalytic mechanism. Ser-190 is subject to Pyruvic acid (Ser); by autocatalysis.

Belongs to the phosphatidylserine decarboxylase family. PSD-A subfamily. In terms of assembly, heterodimer of a large membrane-associated beta subunit and a small pyruvoyl-containing alpha subunit. Pyruvate is required as a cofactor. Is synthesized initially as an inactive proenzyme. Formation of the active enzyme involves a self-maturation process in which the active site pyruvoyl group is generated from an internal serine residue via an autocatalytic post-translational modification. Two non-identical subunits are generated from the proenzyme in this reaction, and the pyruvate is formed at the N-terminus of the alpha chain, which is derived from the carboxyl end of the proenzyme. The post-translation cleavage follows an unusual pathway, termed non-hydrolytic serinolysis, in which the side chain hydroxyl group of the serine supplies its oxygen atom to form the C-terminus of the beta chain, while the remainder of the serine residue undergoes an oxidative deamination to produce ammonia and the pyruvoyl prosthetic group on the alpha chain.

Its subcellular location is the cell membrane. It catalyses the reaction a 1,2-diacyl-sn-glycero-3-phospho-L-serine + H(+) = a 1,2-diacyl-sn-glycero-3-phosphoethanolamine + CO2. It functions in the pathway phospholipid metabolism; phosphatidylethanolamine biosynthesis; phosphatidylethanolamine from CDP-diacylglycerol: step 2/2. Functionally, catalyzes the formation of phosphatidylethanolamine (PtdEtn) from phosphatidylserine (PtdSer). The sequence is that of Phosphatidylserine decarboxylase proenzyme from Cereibacter sphaeroides (strain KD131 / KCTC 12085) (Rhodobacter sphaeroides).